The sequence spans 214 residues: MDSQEYIPQYKLILVGDGGVGKTTFVKRHLTGEFEKKYIPTLGVEVHPLKFQTNFGKTQFNVWDTAGQEKFGGLRDGYYIKSDCAIIMFDVSSRITYKNVPNWYRDITRVCETIPMVLVGNKVDVKDRQVKSRQIQFHRKRNLQYYDLSARSNYNFEKPFLWLARRLSNQPNLVFVGEHAKAPEFQIDLNIVREAEKELEQAAAVAIDEEDIEN.

In terms of domain architecture, Small GTPase Ran-type spans Tyr6–Gln170. Residue Asp17–Thr24 participates in GTP binding. A switch-I region spans residues Lys36–Val44. GTP contacts are provided by residues Gly67, Asn121–Asp124, and Ser149–Arg151. The tract at residues Gly67–Asp83 is switch-II.

The protein belongs to the small GTPase superfamily. Ran family. As to quaternary structure, found in a nuclear export complex with RanGTP, exportin and pre-miRNA.

The protein resides in the nucleus. GTP-binding protein involved in nucleocytoplasmic transport. Required for the import of protein into the nucleus and also for RNA export. Involved in chromatin condensation and control of cell cycle. In Plasmodium falciparum, this protein is GTP-binding nuclear protein Ran.